Reading from the N-terminus, the 338-residue chain is GTPase Obg (338 aa).

The region spanning 1-159 (MKFLDKAIIH…RILRLELILI (159 aa)) is the Obg domain. An OBG-type G domain is found at 160 to 333 (AHVGTLGLPN…IVKKIYDFLK (174 aa)). GTP-binding positions include 166-173 (GLPNSGKS), 191-195 (FTTLK), 213-216 (DIPG), 283-286 (NKID), and 314-316 (SAI). The Mg(2+) site is built by serine 173 and threonine 193.

Belongs to the TRAFAC class OBG-HflX-like GTPase superfamily. OBG GTPase family. In terms of assembly, monomer. The cofactor is Mg(2+).

Its subcellular location is the cytoplasm. Its function is as follows. An essential GTPase which binds GTP, GDP and possibly (p)ppGpp with moderate affinity, with high nucleotide exchange rates and a fairly low GTP hydrolysis rate. Plays a role in control of the cell cycle, stress response, ribosome biogenesis and in those bacteria that undergo differentiation, in morphogenesis control. The chain is GTPase Obg from Buchnera aphidicola subsp. Baizongia pistaciae (strain Bp).